The primary structure comprises 136 residues: DNA-directed RNA polymerase subunit omega (136 aa).

This sequence belongs to the RNA polymerase subunit omega family. The RNAP catalytic core consists of 2 alpha, 1 beta, 1 beta' and 1 omega subunit. When a sigma factor is associated with the core the holoenzyme is formed, which can initiate transcription.

It catalyses the reaction RNA(n) + a ribonucleoside 5'-triphosphate = RNA(n+1) + diphosphate. Its function is as follows. Promotes RNA polymerase assembly. Latches the N- and C-terminal regions of the beta' subunit thereby facilitating its interaction with the beta and alpha subunits. The chain is DNA-directed RNA polymerase subunit omega from Methylorubrum extorquens (strain CM4 / NCIMB 13688) (Methylobacterium extorquens).